We begin with the raw amino-acid sequence, 384 residues long: Interstitial collagenase (384 aa).

Residues Met-1–Ala-25 form the signal peptide. A propeptide spans Glu-26–Glu-88 (activation peptide). The Cysteine switch signature appears at Ser-79–Val-86. Cys-81 lines the Zn(2+) pocket. Positions 113 and 129 each coordinate Ca(2+). Residues His-139 and Asp-141 each coordinate Zn(2+). The Ca(2+) site is built by Asp-146, Gly-147, Gly-149, and Asn-151. His-154 is a Zn(2+) binding site. Residues Gly-161, Gly-163, and Asp-165 each contribute to the Ca(2+) site. His-167 contacts Zn(2+). 3 residues coordinate Ca(2+): Asp-169, Glu-170, and Glu-172. His-189 is a binding site for Zn(2+). The active site involves Glu-190. The Zn(2+) site is built by His-193 and His-199. The tract at residues Leu-218–Pro-239 is disordered. Cys-242 and Cys-381 are oxidised to a cystine. 3 residues coordinate Ca(2+): Asp-249, Gln-277, and Asp-347. Hemopexin repeat units lie at residues Glu-273–Pro-319 and Lys-333–Cys-381.

It belongs to the peptidase M10A family. The cofactor is Ca(2+). Zn(2+) is required as a cofactor.

The protein localises to the secreted. The protein resides in the extracellular space. It localises to the extracellular matrix. It carries out the reaction Cleavage of the triple helix of collagen at about three-quarters of the length of the molecule from the N-terminus, at 775-Gly-|-Ile-776 in the alpha1(I) chain. Cleaves synthetic substrates and alpha-macroglobulins at bonds where P1' is a hydrophobic residue.. With respect to regulation, can be activated without removal of the activation peptide. Functionally, cleaves collagens of types I, II, and III at one site in the helical domain. Also cleaves collagens of types VII and X. The sequence is that of Interstitial collagenase from Aquarana catesbeiana (American bullfrog).